A 445-amino-acid chain; its full sequence is Methionine aminopeptidase 2-2 (445 aa).

The tract at residues 1–92 (MAAQASEDLK…RVPISQLFPN (92 aa)) is disordered. Low complexity predominate over residues 18-33 (AGDSKAAAATAGQAEA). A compositionally biased stretch (acidic residues) spans 34–46 (GEAEDDSDDDEVD). Residues 47–58 (GNAAPEGAASGA) show a composition bias toward low complexity. The span at 59 to 74 (AKKKKKRKPKKKKKGG) shows a compositional bias: basic residues. Residue histidine 198 coordinates substrate. Aspartate 218, aspartate 229, and histidine 298 together coordinate a divalent metal cation. A substrate-binding site is contributed by histidine 306. 2 residues coordinate a divalent metal cation: glutamate 331 and glutamate 426.

Belongs to the peptidase M24A family. Methionine aminopeptidase eukaryotic type 2 subfamily. The cofactor is Co(2+). Requires Zn(2+) as cofactor. Mn(2+) serves as cofactor. Fe(2+) is required as a cofactor.

The protein resides in the cytoplasm. The enzyme catalyses Release of N-terminal amino acids, preferentially methionine, from peptides and arylamides.. Cotranslationally removes the N-terminal methionine from nascent proteins. The N-terminal methionine is often cleaved when the second residue in the primary sequence is small and uncharged (Met-Ala-, Cys, Gly, Pro, Ser, Thr, or Val). The polypeptide is Methionine aminopeptidase 2-2 (Aspergillus terreus (strain NIH 2624 / FGSC A1156)).